The following is a 642-amino-acid chain: Threonine--tRNA ligase (642 aa).

A TGS domain is found at 1–61; it reads MPVITLPDGS…ETDAELSIIT (61 aa). A catalytic region spans residues 243–534; the sequence is DHRKIGKQLD…LIEEYAGRFP (292 aa). Zn(2+) contacts are provided by Cys334, His385, and His511.

Belongs to the class-II aminoacyl-tRNA synthetase family. As to quaternary structure, homodimer. Zn(2+) is required as a cofactor.

It is found in the cytoplasm. It catalyses the reaction tRNA(Thr) + L-threonine + ATP = L-threonyl-tRNA(Thr) + AMP + diphosphate + H(+). Its function is as follows. Catalyzes the attachment of threonine to tRNA(Thr) in a two-step reaction: L-threonine is first activated by ATP to form Thr-AMP and then transferred to the acceptor end of tRNA(Thr). Also edits incorrectly charged L-seryl-tRNA(Thr). This chain is Threonine--tRNA ligase, found in Shewanella sp. (strain W3-18-1).